Here is a 29-residue protein sequence, read N- to C-terminus: MDIVSLAWAALMVVFTFSLSLVVWGRSGL.

The chain crosses the membrane as a helical span at residues 3–23 (IVSLAWAALMVVFTFSLSLVV).

This sequence belongs to the PetN family. The 4 large subunits of the cytochrome b6-f complex are cytochrome b6, subunit IV (17 kDa polypeptide, PetD), cytochrome f and the Rieske protein, while the 4 small subunits are PetG, PetL, PetM and PetN. The complex functions as a dimer.

Its subcellular location is the plastid. It localises to the chloroplast thylakoid membrane. In terms of biological role, component of the cytochrome b6-f complex, which mediates electron transfer between photosystem II (PSII) and photosystem I (PSI), cyclic electron flow around PSI, and state transitions. This Solanum bulbocastanum (Wild potato) protein is Cytochrome b6-f complex subunit 8.